A 182-amino-acid chain; its full sequence is MNYIPELKKYYKDSVIKELVKEFEYKSIMQVPKLEKIVVSVGVGEAVRNKKLLDSAVLELSQITGQKAVKTKAKKAIAGFKIRQGQEIGAKVTLRGNAMYEFLYKLIHLALPRVKDFRGINGNAFDGNGNYSFGITEQIIFSEIDYDKIERISGLNVTIVTTASNDKESKALLLKFGMPFSN.

Belongs to the universal ribosomal protein uL5 family. In terms of assembly, part of the 50S ribosomal subunit; part of the 5S rRNA/L5/L18/L25 subcomplex. Contacts the 5S rRNA and the P site tRNA. Forms a bridge to the 30S subunit in the 70S ribosome.

Its function is as follows. This is one of the proteins that bind and probably mediate the attachment of the 5S RNA into the large ribosomal subunit, where it forms part of the central protuberance. In the 70S ribosome it contacts protein S13 of the 30S subunit (bridge B1b), connecting the 2 subunits; this bridge is implicated in subunit movement. Contacts the P site tRNA; the 5S rRNA and some of its associated proteins might help stabilize positioning of ribosome-bound tRNAs. The protein is Large ribosomal subunit protein uL5 of Borrelia garinii subsp. bavariensis (strain ATCC BAA-2496 / DSM 23469 / PBi) (Borreliella bavariensis).